A 75-amino-acid chain; its full sequence is Protein SlyX homolog (75 aa).

Belongs to the SlyX family.

In Vibrio vulnificus (strain CMCP6), this protein is Protein SlyX homolog.